A 358-amino-acid polypeptide reads, in one-letter code: DNA ligase C (358 aa).

Lys29 acts as the N6-AMP-lysine intermediate in catalysis.

The protein belongs to the ATP-dependent DNA ligase family. A divalent metal cation is required as a cofactor.

The enzyme catalyses ATP + (deoxyribonucleotide)n-3'-hydroxyl + 5'-phospho-(deoxyribonucleotide)m = (deoxyribonucleotide)n+m + AMP + diphosphate.. DNA ligase that seals nicks in double-stranded DNA during DNA replication, DNA recombination and DNA repair. This Mycobacterium tuberculosis (strain ATCC 25618 / H37Rv) protein is DNA ligase C (ligC).